Reading from the N-terminus, the 908-residue chain is Protein translocase subunit SecA (908 aa).

Residues Gln-87, 105-109 (GEGKT), and Asp-512 each bind ATP. Residues 860-908 (AESLVGSSDEHEAVTAQAPMIRDGEKVGRNDPCPCGSGRKYKQCHGKLS) form a disordered region. 4 residues coordinate Zn(2+): Cys-892, Cys-894, Cys-903, and His-904. The span at 898–908 (RKYKQCHGKLS) shows a compositional bias: basic residues.

Belongs to the SecA family. Monomer and homodimer. Part of the essential Sec protein translocation apparatus which comprises SecA, SecYEG and auxiliary proteins SecDF-YajC and YidC. The cofactor is Zn(2+).

Its subcellular location is the cell inner membrane. The protein localises to the cytoplasm. It carries out the reaction ATP + H2O + cellular proteinSide 1 = ADP + phosphate + cellular proteinSide 2.. Functionally, part of the Sec protein translocase complex. Interacts with the SecYEG preprotein conducting channel. Has a central role in coupling the hydrolysis of ATP to the transfer of proteins into and across the cell membrane, serving both as a receptor for the preprotein-SecB complex and as an ATP-driven molecular motor driving the stepwise translocation of polypeptide chains across the membrane. The polypeptide is Protein translocase subunit SecA (Shewanella baltica (strain OS155 / ATCC BAA-1091)).